Reading from the N-terminus, the 136-residue chain is MESFVAMKVVCIVLLFVIAAEAASTGKNPVGDAPNGKKNNITFNFPPYVPNHHAFASSLWKLCEESTPKPEMKIVDSRTTYTRRINDLQVNFKDCTFLCKRRFDNVTLDLPKNTPCGPKNQTCENKDQCVPHIPGC.

Positions 1–22 (MESFVAMKVVCIVLLFVIAAEA) are cleaved as a signal peptide. N-linked (GlcNAc...) asparagine glycosylation occurs at N105. Positions 117-136 (GPKNQTCENKDQCVPHIPGC) are CD4-binding.

Belongs to the salp15 family. In terms of assembly, interacts with host CD4. Interacts with host DC-SIGN (CD209). Interacts with Borrelia outer surface protein C (OspC). In terms of tissue distribution, expressed in salivary glands. Detected in fed adult female.

It is found in the secreted. In terms of biological role, salivary tick protein that downregulates host immune system by binding to both dendritic cells, and CD4(+) T cells. Specifically binds to the CD4 coreceptor on T cells. This interaction prevents the activation of the Src kinase, Lck, and its downstream substrate Zap-70, and results in deficient activation of PLCgamma1, the repression of calcium fluxes triggered by T-cell antigen receptor (TCR) ligation, and a subsequent reduction in interleukin-2 production. This salivary protein also binds to DC-SIGN (CD209) on dendritic cells (DC) and activates the Raf-1 kinase/MEK signaling pathway that results in down-regulating expression of pro-inflammatory cytokines. Furthermore, it inhibits T cell proliferation induced by DCs. In addition, it inhibits in vitro keratinocyte inflammation induced by Borrelia burgdorferi or by the major outer surface protein (OspC) of Borrelia. In addition, it downregulates chemokines and monocyte chemoattractant protein 1, as well as several antimicrobial peptides such as defensins, cathelicidin, psoriasin, and RNase 7. Apart from its immunomodulatory activities, it is also associated with protection of Borrelia spirochetes from antibody-mediated killing through its binding to OspC. In vivo, tests on different immune disease animal models show promising therapeutic results, e.g., in inhibiting HIV infection, experimental autoimmune encephalomyelitis, transplantation rejection, and asthma. In Ixodes ricinus (Common tick), this protein is Salivary protein 15 Iric-2.